Reading from the N-terminus, the 655-residue chain is p-hydroxybenzoic acid efflux pump subunit AaeB (655 aa).

11 consecutive transmembrane segments (helical) span residues 13-33 (FAVK…HFQL), 38-58 (WAVL…GGEP), 69-89 (LRII…ISMI), 93-113 (LLMI…SSLV), 121-141 (WGLS…EPLL), 152-172 (EIVI…PRSI), 370-390 (LFWL…IAVV), 407-427 (FIYG…VIIP), 431-451 (QSML…GIEV), 459-479 (MGAL…TFHF), and 482-502 (FLDS…VILL).

The protein belongs to the aromatic acid exporter ArAE (TC 2.A.85) family.

The protein localises to the cell inner membrane. Functionally, forms an efflux pump with AaeA. Could function as a metabolic relief valve, allowing to eliminate certain compounds when they accumulate to high levels in the cell. The sequence is that of p-hydroxybenzoic acid efflux pump subunit AaeB from Salmonella agona (strain SL483).